Reading from the N-terminus, the 72-residue chain is Arrestin-E (72 aa).

Belongs to the arrestin family. Adrenal, cerebral cortex, heart, hypothalamus, intestine, liver, lung, pituitary, retina and testis.

This is Arrestin-E (Ear) from Rattus norvegicus (Rat).